Reading from the N-terminus, the 147-residue chain is Hemoglobin subunit gamma (147 aa).

One can recognise a Globin domain in the interval His-3–His-147. Residues His-64 and His-93 each contribute to the heme b site.

The protein belongs to the globin family. As to quaternary structure, heterotetramer of two alpha chains and two gamma chains in fetal hemoglobin (Hb F). In terms of tissue distribution, red blood cells.

In terms of biological role, gamma chains make up the fetal hemoglobin F, in combination with alpha chains. The protein is Hemoglobin subunit gamma (HBG) of Eulemur fulvus fulvus (Brown lemur).